The primary structure comprises 360 residues: Tryptophan--tRNA ligase, mitochondrial (360 aa).

Residues 1 to 18 (MALFSVRKARECWRFIRA) constitute a mitochondrion transit peptide. Residues Q42 and 48-51 (HLGN) each bind ATP. An L-tryptophan-binding site is contributed by D167. ATP contacts are provided by residues 179–181 (GED), V217, and 226–230 (KMSKS).

It belongs to the class-I aminoacyl-tRNA synthetase family.

The protein resides in the mitochondrion matrix. It localises to the mitochondrion. The catalysed reaction is tRNA(Trp) + L-tryptophan + ATP = L-tryptophyl-tRNA(Trp) + AMP + diphosphate + H(+). Catalyzes the attachment of tryptophan to tRNA(Trp) in a two-step reaction: tryptophan is first activated by ATP to form Trp-AMP and then transferred to the acceptor end of tRNA(Trp). The chain is Tryptophan--tRNA ligase, mitochondrial (Wars2) from Mus musculus (Mouse).